The sequence spans 425 residues: UPF0761 membrane protein PXO_04555 (425 aa).

Helical transmembrane passes span 48-68, 105-125, 154-174, 182-202, 219-239, and 250-270; these read VFALVPLAIVVFGVLSAFPAF, FTVAGMVALVASLLITLHSIE, GTMLAAASMAMAAYVFALPLF, LAEFAWRLAPMAVEFICIVLI, GALLAVILMEIVKWGFGVYLG, and ALSALPILLLWIYLSWVSVLL.

This sequence belongs to the UPF0761 family.

Its subcellular location is the cell inner membrane. The polypeptide is UPF0761 membrane protein PXO_04555 (Xanthomonas oryzae pv. oryzae (strain PXO99A)).